A 25-amino-acid polypeptide reads, in one-letter code: Neuromedin-U-25 (25 aa).

Gln-18 bears the Pyrrolidone carboxylic acid mark. The residue at position 25 (Asn-25) is an Asparagine amide.

It belongs to the NmU family.

The protein resides in the secreted. Functionally, stimulates uterine smooth muscle contraction and causes selective vasoconstriction. The sequence is that of Neuromedin-U-25 (NMU) from Canis lupus familiaris (Dog).